The chain runs to 880 residues: Interference hedgehog (880 aa).

The first 20 residues, 1-20, serve as a signal peptide directing secretion; sequence MPSIVSSLLLVVLLTSPLGA. Residues 21–703 are Extracellular-facing; that stretch reads IPVLYPSPPP…SHNETFSMSP (683 aa). 4 consecutive Ig-like C2-type domains span residues 37–142, 154–235, 251–339, and 345–432; these read PGVR…TARL, PVTS…STSS, PYLL…FIQV, and PQIV…LQVT. 4 disulfide bridges follow: Cys-60–Cys-126, Cys-172–Cys-219, Cys-275–Cys-323, and Cys-366–Cys-414. N-linked (GlcNAc...) asparagine glycosylation is found at Asn-79, Asn-102, and Asn-208. The tract at residues 435 to 468 is disordered; it reads PIHSESTQQSDHNHSKANRGRRPAQMIPPSAPNV. 2 N-linked (GlcNAc...) asparagine glycosylation sites follow: Asn-447 and Asn-467. Fibronectin type-III domains lie at 462 to 570 and 578 to 673; these read PPSA…LQPG and VPEM…TQRP. Arg-498, Lys-504, Lys-506, and Arg-544 together coordinate heparin. Asn-560 carries N-linked (GlcNAc...) asparagine glycosylation. The tract at residues 665–699 is disordered; sequence LKQGRTQRPMVSTTEEATLQTGVRDTTTPSHNETF. Polar residues predominate over residues 668 to 699; it reads GRTQRPMVSTTEEATLQTGVRDTTTPSHNETF. N-linked (GlcNAc...) asparagine glycosylation occurs at Asn-696. Residues 704–724 traverse the membrane as a helical segment; that stretch reads IVTGTIGGGAVLILFVVTTCL. The Cytoplasmic segment spans residues 725 to 880; that stretch reads CMWRRRNSRA…SSGSLNSVGV (156 aa). The interval 797 to 880 is disordered; that stretch reads YFQRQPTYDY…SSGSLNSVGV (84 aa). Low complexity-rich tracts occupy residues 827–839 and 864–880; these read RAGS…NNLN and SSRS…SVGV.

The protein belongs to the immunoglobulin superfamily. IHOG family. Homodimer. Heterotetramer; 2 iHog chains bind 2 hh chains when facilitated by heparin, heparin is required to promote high-affinity interactions between hh and iHog.

It localises to the membrane. Its function is as follows. Mediates response to the active Hedgehog (Hh) protein signal in embryos, functioning upstream or at the level of patched (ptc). This chain is Interference hedgehog, found in Drosophila ananassae (Fruit fly).